We begin with the raw amino-acid sequence, 222 residues long: L-cystine transport system permease protein TcyL (222 aa).

Residues 1–22 (MQESIQLVIDSLPFLLKGAGYT) are Periplasmic-facing. One can recognise an ABC transmembrane type-1 domain in the interval 19–207 (AGYTLQLSIG…IMATVLSTLQ (189 aa)). Residues 23-43 (LQLSIGGMFFGLLLGFILALM) form a helical membrane-spanning segment. Over 44–64 (RLSPIWPVRWLARFYISIFRG) the chain is Cytoplasmic. A helical membrane pass occupies residues 65 to 85 (TPLIAQLFMIYYGLPQFGIEL). The Periplasmic segment spans residues 86–182 (DPIPSAMIGL…RQAQLITSRT (97 aa)). Residues 183 to 203 (LEVFTMYLAASLIYWIMATVL) traverse the membrane as a helical segment. Residues 204–222 (STLQNHFENQLNRQEREPK) are Cytoplasmic-facing.

It belongs to the binding-protein-dependent transport system permease family. HisMQ subfamily. In terms of assembly, the complex is composed of two ATP-binding proteins (TcyN), two transmembrane proteins (TcyL) and a solute-binding protein (TcyJ).

It localises to the cell inner membrane. Part of the ABC transporter complex TcyJLN involved in L-cystine import. Responsible for the translocation of the substrate across the membrane. In Escherichia coli O6:H1 (strain CFT073 / ATCC 700928 / UPEC), this protein is L-cystine transport system permease protein TcyL.